Reading from the N-terminus, the 279-residue chain is Probable autolysin LDP (279 aa).

The first 24 residues, 1-24, serve as a signal peptide directing secretion; that stretch reads MKKSLTVTVSSVLAFLALNNAAHA. Positions 51-94 constitute a LysM domain; that stretch reads TTYTVVAGDSLYKIALEHHLTLNQLYSYNPGVTPLIFPGDVISL. One can recognise a Peptidase C51 domain in the interval 158–279; it reads VPTVPVAHNY…LNPGKYNYIH (122 aa).

The catalysed reaction is Hydrolyzes the link between N-acetylmuramoyl residues and L-amino acid residues in certain cell-wall glycopeptides.. Its function is as follows. Has weak lytic activity toward S.aureus cells. This Staphylococcus aureus (strain NCTC 8325 / PS 47) protein is Probable autolysin LDP.